The following is a 113-amino-acid chain: uncharacterized protein (113 aa).

Basic and acidic residues predominate over residues 1–19 (MDKKSAHRNPEDAKAGKYE). Positions 1–94 (MDKKSAHRNP…NKWRGKRKVS (94 aa)) are disordered. Residues 20-41 (GKHKRKKKRKQNQNQHRSRHRS) show a composition bias toward basic residues. Positions 52–66 (FPSSSSSSSGSQTDS) are enriched in low complexity. Residues 75–92 (KIKKKRREKTNKWRGKRK) show a composition bias toward basic residues.

This is an uncharacterized protein from Macaca fascicularis (Crab-eating macaque).